The chain runs to 142 residues: Low molecular weight protein-tyrosine-phosphatase Ptp (142 aa).

Cysteine 10 serves as the catalytic Nucleophile. Residue arginine 16 is part of the active site. The active-site Proton donor is the aspartate 115.

The protein belongs to the low molecular weight phosphotyrosine protein phosphatase family.

It catalyses the reaction O-phospho-L-tyrosyl-[protein] + H2O = L-tyrosyl-[protein] + phosphate. Its pathway is glycan metabolism; exopolysaccharide biosynthesis. With respect to regulation, inhibited by ammonium molybdate, sodium orthovanadate, N-ethylmaleimide and iodoacetic acid. Functionally, dephosphorylates ptk. May be involved in the production and the transport of exopolysaccharides. The sequence is that of Low molecular weight protein-tyrosine-phosphatase Ptp (ptp) from Acinetobacter johnsonii.